The primary structure comprises 101 residues: Urease subunit beta (101 aa).

It belongs to the urease beta subunit family. In terms of assembly, heterotrimer of UreA (gamma), UreB (beta) and UreC (alpha) subunits. Three heterotrimers associate to form the active enzyme.

It localises to the cytoplasm. It catalyses the reaction urea + 2 H2O + H(+) = hydrogencarbonate + 2 NH4(+). It functions in the pathway nitrogen metabolism; urea degradation; CO(2) and NH(3) from urea (urease route): step 1/1. This Pseudomonas fluorescens (strain ATCC BAA-477 / NRRL B-23932 / Pf-5) protein is Urease subunit beta.